Here is a 572-residue protein sequence, read N- to C-terminus: MLSKSEKNVDLLAGNMSNLSFDGHGTPGGTGLFPNQNITKRRTRPAGINDSPSPVKPSFFPYEDTSNMDIDEVSQPDMDVSNSPKKLPPKFYERATSNKTQRVVSVCKMYFLEHYCDMFDYVISRRQRTKQVLEYLQQQSQLPNSDQIKLNEEWSSYLQREHQVLRKRRLKPKNRDFEMITQVGQGGYGQVYLARKKDTKEVCALKILNKKLLFKLNETKHVLTERDILTTTRSEWLVKLLYAFQDLQSLYLAMEFVPGGDFRTLLINTRCLKSGHARFYISEMFCAVNALHDLGYTHRDLKPENFLIDAKGHIKLTDFGLAAGTISNERIESMKIRLEKIKDLEFPAFTEKSIEDRRKMYNQLREKEINYANSMVGSPDYMALEVLEGKKYDFTVDYWSLGCMLFESLVGYTPFSGSSTNETYDNLRRWKQTLRRPRQSDGRAAFSDRTWDLITRLIADPINRLRSFEHVKRMSYFADINFSTLRSMIPPFTPQLDSETDAGYFDDFTSEADMAKYADVFKRQDKLTAMVDDSAVSSKLVGFTFRHRNGKQGSSGILFNGLEHSDPFSTFY.

Residues Ser17, Ser20, and Ser74 each carry the phosphoserine modification. Residues 177–477 enclose the Protein kinase domain; that stretch reads FEMITQVGQG…FEHVKRMSYF (301 aa). Residues 183-191 and Lys206 contribute to the ATP site; that span reads VGQGGYGQV. The active-site Proton acceptor is Asp300. Residue Ser374 is modified to Phosphoserine; by CDC15. In terms of domain architecture, AGC-kinase C-terminal spans 478–555; it reads ADINFSTLRS…RHRNGKQGSS (78 aa). Thr544 carries the phosphothreonine; by CDC15 modification.

This sequence belongs to the protein kinase superfamily. Ser/Thr protein kinase family. Interacts with MOB1. MOB1-binding is required for a late mitotic event. Phosphorylation of Ser-374 and Thr-544 by CDC15 is essential for activation of DBF2 kinase activity.

The protein resides in the cytoplasm. The protein localises to the cytoskeleton. It is found in the microtubule organizing center. Its subcellular location is the spindle pole body. It localises to the bud neck. The protein resides in the nucleus. It carries out the reaction L-seryl-[protein] + ATP = O-phospho-L-seryl-[protein] + ADP + H(+). It catalyses the reaction L-threonyl-[protein] + ATP = O-phospho-L-threonyl-[protein] + ADP + H(+). Kinase activity is regulated by BUB2, CDC15 and CDC5, and is maximal during nuclear division. CDK1 kinase inhibits cellular DBF2-MOB1 kinase activity via phosphorylation of both CDC15 and MOB1. In terms of biological role, ser/Thr-protein kinase involved in the mitotic exit network (MEN) and required after the metaphase to anaphase cell cycle transition. Phosphorylates CHS2 to regulate its dynamics and chitin synthesis at the division site during cytokinesis. Coordinates septin and actomyosin ring (AMR) functions during cytokinesis through the phosphorylation of HOF1. In complex with MOB1, phosphorylates CDC14 at sites adjacent to its nuclear localization sequence, thereby retaining CDC14 in the cytoplasm. Also binds to SWI5 and CLB2 mRNAs cotranscriptionally to regulate their decay. In the nucleus, the DBF2-MOB1 complex regulates passenger protein localization during anaphase. Mediates sorbic acid stress tolerance through promoting vacuolar H(+)-ATPase function, probably through phosphorylation of VMA1 and VMA2 subunits. This Saccharomyces cerevisiae (strain ATCC 204508 / S288c) (Baker's yeast) protein is Cell cycle protein kinase DBF2 (DBF2).